Consider the following 218-residue polypeptide: MLTVALPKGELLKNSIRLLKSVGLDFSAFLDSGNRQLQITDASGRAKGLLVRGQDVPVYVEYGQAQIGIIGYDVLREKQPQVAHLVDLQFGYCRMSVAVKASSPYKSPLDLPAHSRVASKYVNSAREFFQGLDLPVEIVPLYGSVELGPITGMSEAIVDIVSTGRTLKENGLVEITTLYESTARLIAHPLSYRLNTGNLHQLVEQLREGVLSELPILT.

The protein belongs to the ATP phosphoribosyltransferase family. Short subfamily. Heteromultimer composed of HisG and HisZ subunits.

The protein resides in the cytoplasm. It carries out the reaction 1-(5-phospho-beta-D-ribosyl)-ATP + diphosphate = 5-phospho-alpha-D-ribose 1-diphosphate + ATP. It participates in amino-acid biosynthesis; L-histidine biosynthesis; L-histidine from 5-phospho-alpha-D-ribose 1-diphosphate: step 1/9. In terms of biological role, catalyzes the condensation of ATP and 5-phosphoribose 1-diphosphate to form N'-(5'-phosphoribosyl)-ATP (PR-ATP). Has a crucial role in the pathway because the rate of histidine biosynthesis seems to be controlled primarily by regulation of HisG enzymatic activity. This Trichormus variabilis (strain ATCC 29413 / PCC 7937) (Anabaena variabilis) protein is ATP phosphoribosyltransferase.